The sequence spans 308 residues: 4-hydroxy-3-methylbut-2-enyl diphosphate reductase 2 (308 aa).

C12 provides a ligand contact to [4Fe-4S] cluster. H41 and H74 together coordinate (2E)-4-hydroxy-3-methylbut-2-enyl diphosphate. The dimethylallyl diphosphate site is built by H41 and H74. Positions 41 and 74 each coordinate isopentenyl diphosphate. C96 provides a ligand contact to [4Fe-4S] cluster. H124 lines the (2E)-4-hydroxy-3-methylbut-2-enyl diphosphate pocket. H124 is a dimethylallyl diphosphate binding site. H124 serves as a coordination point for isopentenyl diphosphate. The active-site Proton donor is the E126. T164 contacts (2E)-4-hydroxy-3-methylbut-2-enyl diphosphate. [4Fe-4S] cluster is bound at residue C194. Residues S222, S223, N224, and S266 each coordinate (2E)-4-hydroxy-3-methylbut-2-enyl diphosphate. Residues S222, S223, N224, and S266 each coordinate dimethylallyl diphosphate. Residues S222, S223, N224, and S266 each coordinate isopentenyl diphosphate.

This sequence belongs to the IspH family. [4Fe-4S] cluster is required as a cofactor.

It carries out the reaction isopentenyl diphosphate + 2 oxidized [2Fe-2S]-[ferredoxin] + H2O = (2E)-4-hydroxy-3-methylbut-2-enyl diphosphate + 2 reduced [2Fe-2S]-[ferredoxin] + 2 H(+). The catalysed reaction is dimethylallyl diphosphate + 2 oxidized [2Fe-2S]-[ferredoxin] + H2O = (2E)-4-hydroxy-3-methylbut-2-enyl diphosphate + 2 reduced [2Fe-2S]-[ferredoxin] + 2 H(+). It participates in isoprenoid biosynthesis; dimethylallyl diphosphate biosynthesis; dimethylallyl diphosphate from (2E)-4-hydroxy-3-methylbutenyl diphosphate: step 1/1. The protein operates within isoprenoid biosynthesis; isopentenyl diphosphate biosynthesis via DXP pathway; isopentenyl diphosphate from 1-deoxy-D-xylulose 5-phosphate: step 6/6. Functionally, catalyzes the conversion of 1-hydroxy-2-methyl-2-(E)-butenyl 4-diphosphate (HMBPP) into a mixture of isopentenyl diphosphate (IPP) and dimethylallyl diphosphate (DMAPP). Acts in the terminal step of the DOXP/MEP pathway for isoprenoid precursor biosynthesis. The chain is 4-hydroxy-3-methylbut-2-enyl diphosphate reductase 2 from Bradyrhizobium diazoefficiens (strain JCM 10833 / BCRC 13528 / IAM 13628 / NBRC 14792 / USDA 110).